An 834-amino-acid polypeptide reads, in one-letter code: Taste receptor type 1 member 2 (834 aa).

An N-terminal signal peptide occupies residues 1–19 (MEPRVRTVCFLFFLLRVLA). Topologically, residues 20–561 (EPAKNSDFYL…SFLEWHEAAT (542 aa)) are extracellular. N-linked (GlcNAc...) asparagine glycans are attached at residues N84, N292, N312, N363, N423, N482, and N522. A helical transmembrane segment spans residues 562–582 (IAVALLAALGFLSTLAILVIF). At 583–597 (WRHFETPMVRSAGGP) the chain is on the cytoplasmic side. Residues 598 to 618 (MCFLMLTLLLVAYMVVPVYVG) form a helical membrane-spanning segment. Residues 619–630 (LPKVSTCLCRQA) lie on the Extracellular side of the membrane. Residues 631–651 (LFPVCFTICISCIAVRSFQIV) traverse the membrane as a helical segment. At 652 to 676 (CVFKMASRFPRAYSYWVRYQGSYVS) the chain is on the cytoplasmic side. A helical membrane pass occupies residues 677–697 (VAFITALKMVTVVISLLATGL). At 698 to 722 (NPTTRTDTDDPKIMIISCNPNYRNS) the chain is on the extracellular side. Residues 723 to 743 (LLFNTSLDLLLSVAGFSFAYM) traverse the membrane as a helical segment. Over 744–755 (GKELPTNYNEAK) the chain is Cytoplasmic. Residues 756–776 (FITFSMTFYFTSSVSLCTFMS) form a helical membrane-spanning segment. Over 777 to 779 (VYD) the chain is Extracellular. A helical transmembrane segment spans residues 780 to 800 (GVLVTIVDLLVTVFNLLAISL). Residues 801–834 (GYFGPKCYMILFYPERNTPAYFNSMIQGYTMRRD) lie on the Cytoplasmic side of the membrane.

It belongs to the G-protein coupled receptor 3 family. TAS1R subfamily. In terms of assembly, forms heterodimers with TAS1R3.

It localises to the cell membrane. Putative taste receptor. TAS1R2/TAS1R3 recognizes diverse natural and synthetic sweeteners. This chain is Taste receptor type 1 member 2 (TAS1R2), found in Saimiri sciureus (Common squirrel monkey).